Consider the following 338-residue polypeptide: m7GpppX diphosphatase (338 aa).

Residues 1 to 36 (MADTAPQLKRKREQEAEEAETPSTEEKEAGVGNGTS) are disordered. Ala-2 bears the N-acetylalanine mark. A nuclear localization signal (NLS) motif is present at residues 9-12 (KRKR). Ser-23 and Ser-100 each carry phosphoserine. 2 positions are modified to N6-acetyllysine: Lys-137 and Lys-141. Positions 141–153 (KYMRQDLRLIRET) match the nuclear export sequence (NES) motif. Substrate contacts are provided by residues Trp-174, Glu-184, Asp-204, Lys-206, and 267-278 (HYLPSYYHLHVH). The short motif at 274–278 (HLHVH) is the Histidine triad motif element. Catalysis depends on His-276, which acts as the Nucleophile.

It belongs to the HIT family. As to quaternary structure, homodimer. Associates with components of the exosome multienzyme ribonuclease complex, such as EXOSC3 and EXOSC4. Interacts with NDOR1.

It localises to the cytoplasm. Its subcellular location is the nucleus. The catalysed reaction is a 5'-end (N(7)-methyl 5'-triphosphoguanosine)-ribonucleoside in mRNA + H2O = N(7)-methyl-GMP + a 5'-end diphospho-ribonucleoside in mRNA + 2 H(+). Its activity is regulated as follows. The hydrolytic product 7-methylguanosine diphosphate (m7GDP) efficiently inhibits the decapping scavenger activity and acts as a competitive inhibitor in vitro. Inhibited by 2,4-diaminoquinazoline. Its function is as follows. Decapping scavenger enzyme that catalyzes the cleavage of a residual cap structure following the degradation of mRNAs by the 3'-&gt;5' exosome-mediated mRNA decay pathway. Hydrolyzes cap analog structures like 7-methylguanosine nucleoside triphosphate (m7GpppG) with up to 10 nucleotide substrates (small capped oligoribonucleotides) and specifically releases 5'-phosphorylated RNA fragments and 7-methylguanosine monophosphate (m7GMP). Cleaves cap analog structures like tri-methyl guanosine nucleoside triphosphate (m3(2,2,7)GpppG) with very poor efficiency. Does not hydrolyze unmethylated cap analog (GpppG) and shows no decapping activity on intact m7GpppG-capped mRNA molecules longer than 25 nucleotides. Does not hydrolyze 7-methylguanosine diphosphate (m7GDP) to m7GMP. May also play a role in the 5'-&gt;3 mRNA decay pathway; m7GDP, the downstream product released by the 5'-&gt;3' mRNA mediated decapping activity, may be also converted by DCPS to m7GMP. Binds to m7GpppG and strongly to m7GDP. Plays a role in first intron splicing of pre-mRNAs. Inhibits activation-induced cell death. In Mus musculus (Mouse), this protein is m7GpppX diphosphatase (Dcps).